Reading from the N-terminus, the 582-residue chain is ATP-dependent lipid A-core flippase (582 aa).

5 helical membrane-spanning segments follow: residues 27–47 (LIVA…MISL), 69–89 (LIIF…TYCL), 142–162 (ALVS…LMFY), 165–185 (WQLS…IGVV), and 249–269 (AAAN…VLYL). Residues 28 to 310 (IVAVIALVIN…LTNVTSQFQR (283 aa)) form the ABC transmembrane type-1 domain. The ABC transporter domain maps to 342–578 (VSVKDVSFTY…NGAYAQLHRI (237 aa)). 376-383 (GRSGSGKS) lines the ATP pocket.

Belongs to the ABC transporter superfamily. Lipid exporter (TC 3.A.1.106) family. As to quaternary structure, homodimer.

It localises to the cell inner membrane. The catalysed reaction is ATP + H2O + lipid A-core oligosaccharideSide 1 = ADP + phosphate + lipid A-core oligosaccharideSide 2.. Involved in lipopolysaccharide (LPS) biosynthesis. Translocates lipid A-core from the inner to the outer leaflet of the inner membrane. Transmembrane domains (TMD) form a pore in the inner membrane and the ATP-binding domain (NBD) is responsible for energy generation. This chain is ATP-dependent lipid A-core flippase, found in Vibrio parahaemolyticus serotype O3:K6 (strain RIMD 2210633).